Reading from the N-terminus, the 412-residue chain is NFATC2-interacting protein (412 aa).

Positions 1-38 are disordered; that stretch reads MAEPLRGRGPRSRGGRGARRARGARGRCPRARQSPARL. A compositionally biased stretch (basic residues) spans 8–30; that stretch reads RGPRSRGGRGARRARGARGRCPR. S49, S51, S79, S81, and S83 each carry phosphoserine. The segment at 58 to 115 is disordered; that stretch reads VADPVEVPVARLPAPAKPEQDSDSDSEGAAEGPAGAPRTLVRRRRRRLLDPGEAPVVP. A compositionally biased stretch (low complexity) spans 86–96; the sequence is AAEGPAGAPRT. S118 carries the post-translational modification Phosphoserine. A Glycyl lysine isopeptide (Lys-Gly) (interchain with G-Cter in SUMO2) cross-link involves residue K120. The tract at residues 136–206 is disordered; the sequence is KLCPSEPEDE…SSRNKSRKHT (71 aa). A coiled-coil region spans residues 168–227; sequence RKKLRKKCEKEEKKMEEFPDQDISPLPQPSSRNKSRKHTEALQKLREVNKRLQDLRSCLS. The segment covering 175 to 184 has biased composition (basic and acidic residues); it reads CEKEEKKMEE. S191, S197, and S307 each carry phosphoserine. Phosphothreonine occurs at positions 309 and 311. One can recognise a Ubiquitin-like domain in the interval 341 to 412; that stretch reads LRLRVQGKEK…ESGDLIEVWG (72 aa). S362 and S383 each carry phosphoserine.

In terms of assembly, interacts with NFATC2, TRAF1, TRAF2 and PRMT1. Interacts with UBE2I/UBC9. In terms of processing, methylation at the N-terminus by PRMT1 modulates interaction with the NFAT complex and results in augmented cytokine production. In terms of tissue distribution, highest level detected in spleen, thymus and testis.

The protein resides in the nucleus. It is found in the cytoplasm. Its function is as follows. In T-helper 2 (Th2) cells, regulates the magnitude of NFAT-driven transcription of a specific subset of cytokine genes, including IL3, IL4, IL5 and IL13, but not IL2. Recruits PRMT1 to the IL4 promoter; this leads to enhancement of histone H4 'Arg-3'-methylation and facilitates subsequent histone acetylation at the IL4 locus, thus promotes robust cytokine expression. Down-regulates formation of poly-SUMO chains by UBE2I/UBC9. In Mus musculus (Mouse), this protein is NFATC2-interacting protein (Nfatc2ip).